The primary structure comprises 233 residues: Methyltransferase srdJ (233 aa).

The tract at residues 1-32 is disordered; the sequence is MFQVQTAGTRTGTSSPDTTTSEAGLGSTPPMP. Low complexity predominate over residues 9–21; it reads TRTGTSSPDTTTS. The S-adenosyl-L-methionine site is built by Trp40, Trp52, and Gly81. A Required for methyltransferase activity motif is present at residues 140–146; sequence EISSQKY.

This sequence belongs to the methyltransferase superfamily.

Functionally, methyltransferase; part of the gene cluster that mediates the biosynthesis of sordarial, a salicylic aldehyde structurally related to the phytotoxin pyriculol. The most interesting aspect of this pathway is formation of an aromatic product from the highly reducing polyketide synthase srdA. SrdA synthesizes a reduced polyketide chain from one molecule of acetyl-CoA and five molecules of malonyl-CoA. The polyketide chain is then reductively released as an aldehyde. The oxidoreductases srdC, srdD and srdE then oxidize one of the hydroxy groups to facilitate the intramolecular aldol condensation, followed by dehydration to yield a salicylic aldehyde. This aldehyde can undergo facile reduction by endogenous reductases to yield the alcohol 1-hydroxy-2-hydroxymethyl-3-pent-1,3-dienylbenzene. The flavin-dependent srdI counteract against the propensity of the aldehydes to be reduced under physiological conditions and is responsible for reoxidizing 1-hydroxy-2-hydroxymethyl-3-pent-1,3-dienylbenzene back to the salicylic aldehyde. This salicylic aldehyde is then selectively epoxidized by the cupin-domain-containing oxidoreductase srdB to yield the epoxide, which can be hydrolyzed stereoselectively by the hydrolase srdG to give the final product sordarial. The sequence is that of Methyltransferase srdJ from Neurospora crassa (strain ATCC 24698 / 74-OR23-1A / CBS 708.71 / DSM 1257 / FGSC 987).